A 427-amino-acid chain; its full sequence is Tuberculostearic acid methyltransferase UfaA1 (427 aa).

It belongs to the CFA/CMAS family.

The protein operates within lipid metabolism; fatty acid biosynthesis. Inhibited by S-adenosyl-L-homocysteine. Functionally, involved in the biosynthesis of the tuberculostearic acid (10-methylstearic-acid or TSA), a constituent lipid of the mycobacterial cell wall. Catalyzes the transfer of the methyl group from S-adenosyl-L-methionine (SAM) to the double bond of oleic acid in phosphatidylethanolamine or phosphatidylcholine to produce TSA. This Mycobacterium tuberculosis (strain ATCC 25618 / H37Rv) protein is Tuberculostearic acid methyltransferase UfaA1.